Consider the following 292-residue polypeptide: CCR4-NOT transcription complex subunit 8 (292 aa).

A divalent metal cation contacts are provided by Asp-40, Glu-42, Asp-161, and Asp-230.

Belongs to the CAF1 family. In terms of assembly, component of the CCR4-NOT complex; distinct complexes seem to exist that differ in the participation of probably mutually exclusive catalytic subunits; the complex contains two deadenylase subunits, CNOT6 or CNOT6L, and CNOT7 or CNOT8. In the complex interacts directly with CNOT1. Interacts with BTG1, BTG2 and TOB1. Interacts with BTG4.

Its subcellular location is the cytoplasm. It is found in the nucleus. It carries out the reaction Exonucleolytic cleavage of poly(A) to 5'-AMP.. Its function is as follows. Has 3'-5' poly(A) exoribonuclease activity for synthetic poly(A) RNA substrate. Its function seems to be partially redundant with that of CNOT7. Catalytic component of the CCR4-NOT complex which is linked to various cellular processes including bulk mRNA degradation, miRNA-mediated repression, translational repression during translational initiation and general transcription regulation. During miRNA-mediated repression the complex also seems to act as translational repressor during translational initiation. Additional complex functions may be a consequence of its influence on mRNA expression. Associates with members of the BTG family such as TOB1 and BTG2 and is required for their anti-proliferative activity. The chain is CCR4-NOT transcription complex subunit 8 (Cnot8) from Mus musculus (Mouse).